A 525-amino-acid polypeptide reads, in one-letter code: Rho guanine nucleotide exchange factor gef3 (525 aa).

The DH domain occupies 72-268; the sequence is AIISVLEEFR…EIASQRMNEL (197 aa).

The protein localises to the cytoplasm. Has a role in the control of cell polarity and cytokinesis. Involved in bipolar growth and septum formation. In Schizosaccharomyces pombe (strain 972 / ATCC 24843) (Fission yeast), this protein is Rho guanine nucleotide exchange factor gef3 (gef3).